We begin with the raw amino-acid sequence, 397 residues long: MSAVLVVNSGSSSLKYQLIDAKSEEALATGLIERVGEGEGRIRHRGPGGSAEYTLVIPDHTAAFRAMLAAFGTDGSSLVEHPLDAVGHRVVHGGKRFFEPTIVTPLVEANIDDLADLAPLHNPANLDGIRAARQAFPAVPHVAVFDTAFHQTLEPAAYTYAIDAALAEEHRVRRYGFHGTSHKYVSGAVAELLGRPLGELKQIVLHLGNGASACAVDGGRSIDTSMGMTPLEGLVMGTRSGDIDPAVLFHLSRRAGLGIDELDELLNRRSGLLGLTGHGDMRDVRRVAESGDAVARLALDTVAHRLKHYIGAYTALLGGLDALTFTAGVGENDPDLRAAACKGLGVLGIQLDPERNAARSPGARIVSADGSPVTVLVVPTNEELEIARQALQAVAAG.

N8 is a binding site for Mg(2+). K15 contributes to the ATP binding site. R89 provides a ligand contact to substrate. D146 functions as the Proton donor/acceptor in the catalytic mechanism. ATP-binding positions include 206 to 210, 280 to 282, and 328 to 332; these read HLGNG, DMR, and GVGEN. E382 is a Mg(2+) binding site.

It belongs to the acetokinase family. Homodimer. The cofactor is Mg(2+). Mn(2+) is required as a cofactor.

The protein localises to the cytoplasm. It catalyses the reaction acetate + ATP = acetyl phosphate + ADP. Its pathway is metabolic intermediate biosynthesis; acetyl-CoA biosynthesis; acetyl-CoA from acetate: step 1/2. In terms of biological role, catalyzes the formation of acetyl phosphate from acetate and ATP. Can also catalyze the reverse reaction. The polypeptide is Acetate kinase (Leifsonia xyli subsp. xyli (strain CTCB07)).